The primary structure comprises 101 residues: Small ribosomal subunit protein bS18c (101 aa).

The protein belongs to the bacterial ribosomal protein bS18 family. Part of the 30S ribosomal subunit.

Its subcellular location is the plastid. It localises to the chloroplast. This Solanum bulbocastanum (Wild potato) protein is Small ribosomal subunit protein bS18c.